We begin with the raw amino-acid sequence, 122 residues long: Large ribosomal subunit protein uL14 (122 aa).

This sequence belongs to the universal ribosomal protein uL14 family. In terms of assembly, part of the 50S ribosomal subunit. Forms a cluster with proteins L3 and L19. In the 70S ribosome, L14 and L19 interact and together make contacts with the 16S rRNA in bridges B5 and B8.

In terms of biological role, binds to 23S rRNA. Forms part of two intersubunit bridges in the 70S ribosome. In Desulforamulus reducens (strain ATCC BAA-1160 / DSM 100696 / MI-1) (Desulfotomaculum reducens), this protein is Large ribosomal subunit protein uL14.